A 292-amino-acid chain; its full sequence is MVNQNKIIPYLFLVPALVFLLFVYIPIFENVFLSLFQWSSFSPEKTFIGLKNYVELFHDPVFYQALTNNVLYAVISIVCQVFGGLILAAVLEDKLVRKWSPFFRTVFFLPVVISMTVIALLFDFIYNPETGLLNQLLQAIGLDQLTRAWLGDDSTAMLSVIFVSQWQSVGYIAMLYIVSIQKIPDELYEAARLDGAGKIQQFFHITVPQTKEMSFVAVVMTLTGAFTVFNEPYILTGGGPGKASEVLSTFLYKSAFTKDMMGYASAIATVVLIITLALSLMQMKFFKTGKEE.

6 helical membrane-spanning segments follow: residues 7 to 27 (IIPY…YIPI), 70 to 90 (VLYA…LAAV), 106 to 126 (VFFL…DFIY), 160 to 180 (VIFV…IVSI), 215 to 235 (FVAV…PYIL), and 260 to 280 (MMGY…ALSL). Residues 66-282 (LTNNVLYAVI…IITLALSLMQ (217 aa)) enclose the ABC transmembrane type-1 domain.

The protein belongs to the binding-protein-dependent transport system permease family. MalFG subfamily.

The protein resides in the cell membrane. Its function is as follows. Probably part of the binding-protein-dependent transport system YurMNO. Probably responsible for the translocation of the substrate across the membrane. This is Probable ABC transporter permease protein YurN (yurN) from Bacillus subtilis (strain 168).